The chain runs to 238 residues: Probable transcriptional regulatory protein TC_0742 (238 aa).

A disordered region spans residues 1 to 21 (MAGHSKWANTKHRKERADHKK). Positions 9 to 21 (NTKHRKERADHKK) are enriched in basic residues.

The protein belongs to the TACO1 family.

It is found in the cytoplasm. This chain is Probable transcriptional regulatory protein TC_0742, found in Chlamydia muridarum (strain MoPn / Nigg).